The chain runs to 395 residues: Elongation factor Tu (395 aa).

Positions 10–204 (KPHVNIGTIG…AVDEYIPTPQ (195 aa)) constitute a tr-type G domain. The segment at 19-26 (GHVDHGKT) is G1. 19 to 26 (GHVDHGKT) provides a ligand contact to GTP. Thr26 is a binding site for Mg(2+). The tract at residues 60–64 (GITIS) is G2. The G3 stretch occupies residues 81–84 (DCPG). GTP-binding positions include 81–85 (DCPGH) and 136–139 (NKCD). The G4 stretch occupies residues 136–139 (NKCD). A G5 region spans residues 174–176 (SAL).

The protein belongs to the TRAFAC class translation factor GTPase superfamily. Classic translation factor GTPase family. EF-Tu/EF-1A subfamily. In terms of assembly, monomer.

The protein localises to the cytoplasm. The enzyme catalyses GTP + H2O = GDP + phosphate + H(+). In terms of biological role, GTP hydrolase that promotes the GTP-dependent binding of aminoacyl-tRNA to the A-site of ribosomes during protein biosynthesis. This is Elongation factor Tu from Geobacillus sp. (strain WCH70).